Consider the following 48-residue polypeptide: ATP synthase protein 8 (48 aa).

The helical transmembrane segment at 13-35 threads the bilayer; that stretch reads LTYGFTFILTILFLTSYVFLPMI.

It belongs to the ATPase protein 8 family. F-type ATPases have 2 components, CF(1) - the catalytic core - and CF(0) - the membrane proton channel. In yeast, the dimeric form of ATP synthase consists of 18 polypeptides: alpha, beta, gamma, delta, epsilon, 4 (B), 5 (OSCP), 6 (A), 8, 9 (C), d, E (Tim11), f, g, h, i, j and k.

It is found in the mitochondrion membrane. Functionally, mitochondrial membrane ATP synthase (F(1)F(0) ATP synthase or Complex V) produces ATP from ADP in the presence of a proton gradient across the membrane which is generated by electron transport complexes of the respiratory chain. F-type ATPases consist of two structural domains, F(1) - containing the extramembraneous catalytic core and F(0) - containing the membrane proton channel, linked together by a central stalk and a peripheral stalk. During catalysis, ATP synthesis in the catalytic domain of F(1) is coupled via a rotary mechanism of the central stalk subunits to proton translocation. Part of the complex F(0) domain. Minor subunit located with subunit a in the membrane. The polypeptide is ATP synthase protein 8 (ATP8) (Eremothecium gossypii (strain ATCC 10895 / CBS 109.51 / FGSC 9923 / NRRL Y-1056) (Yeast)).